A 571-amino-acid chain; its full sequence is ATP-dependent RNA helicase RhlB (571 aa).

Positions 9–37 (VTFSSFDLHPALIAGLESAGFTRCTPIQA) match the Q motif motif. Residues 40 to 220 (LPVALPGGDV…YEHMNEPEKL (181 aa)) enclose the Helicase ATP-binding domain. 53–60 (AQTGTGKT) is an ATP binding site. The DEAD box signature appears at 166-169 (DEAD). One can recognise a Helicase C-terminal domain in the interval 231 to 393 (RVRQRIYFPS…PVTSELLTPL (163 aa)). The segment at 391-558 (TPLPRAPRVP…KPSGSPSLLS (168 aa)) is disordered. Acidic residues predominate over residues 402–411 (EGEEADDDAG). Over residues 419-432 (REAREQRAAEEQRR) the composition is skewed to basic and acidic residues. A compositionally biased stretch (gly residues) spans 435 to 448 (GRGGPGGSRSGSGG). The segment covering 449–460 (GRRDGAGADGKP) has biased composition (basic and acidic residues). Residues 483-497 (VVAAVAAQAPSAGVA) are compositionally biased toward low complexity. Residues 503-512 (PRKRRRRRNG) are compositionally biased toward basic residues. The segment covering 539 to 558 (VVAKPVRAAAKPSGSPSLLS) has biased composition (low complexity).

The protein belongs to the DEAD box helicase family. RhlB subfamily. Component of the RNA degradosome, which is a multiprotein complex involved in RNA processing and mRNA degradation.

It is found in the cytoplasm. The catalysed reaction is ATP + H2O = ADP + phosphate + H(+). Functionally, DEAD-box RNA helicase involved in RNA degradation. Has RNA-dependent ATPase activity and unwinds double-stranded RNA. This is ATP-dependent RNA helicase RhlB from Xanthomonas axonopodis pv. citri (strain 306).